A 610-amino-acid chain; its full sequence is UvrABC system protein C (610 aa).

The 79-residue stretch at 16–94 folds into the GIY-YIG domain; that stretch reads SQPGVYRMYD…IKLYQPRYNV (79 aa). The 36-residue stretch at 204 to 239 folds into the UVR domain; the sequence is QQVLTQLITRMEEASQQLHFEDAARIRDQIQAVRRV.

The protein belongs to the UvrC family. As to quaternary structure, interacts with UvrB in an incision complex.

It is found in the cytoplasm. Functionally, the UvrABC repair system catalyzes the recognition and processing of DNA lesions. UvrC both incises the 5' and 3' sides of the lesion. The N-terminal half is responsible for the 3' incision and the C-terminal half is responsible for the 5' incision. The chain is UvrABC system protein C from Yersinia pseudotuberculosis serotype I (strain IP32953).